The chain runs to 239 residues: Small ribosomal subunit protein uS3 (239 aa).

The KH type-2 domain maps to 39-107 (VRQVLRKKMS…PVHINVIEVR (69 aa)). Residues 214 to 239 (SQEKQDDGSRGDRNADRSSRRSREVR) form a disordered region. The span at 216–239 (EKQDDGSRGDRNADRSSRRSREVR) shows a compositional bias: basic and acidic residues.

This sequence belongs to the universal ribosomal protein uS3 family. Part of the 30S ribosomal subunit. Forms a tight complex with proteins S10 and S14.

Its function is as follows. Binds the lower part of the 30S subunit head. Binds mRNA in the 70S ribosome, positioning it for translation. This chain is Small ribosomal subunit protein uS3, found in Xylella fastidiosa (strain M23).